The following is a 45-amino-acid chain: Large ribosomal subunit protein bL34 (45 aa).

The protein belongs to the bacterial ribosomal protein bL34 family.

This chain is Large ribosomal subunit protein bL34, found in Opitutus terrae (strain DSM 11246 / JCM 15787 / PB90-1).